The primary structure comprises 616 residues: Chaperone protein HscA (616 aa).

The protein belongs to the heat shock protein 70 family.

Functionally, chaperone involved in the maturation of iron-sulfur cluster-containing proteins. Has a low intrinsic ATPase activity which is markedly stimulated by HscB. Involved in the maturation of IscU. In Klebsiella pneumoniae (strain 342), this protein is Chaperone protein HscA.